Reading from the N-terminus, the 160-residue chain is MADIEDTHFETGDSGASATFPMQCSALRKNGFVMLKGRPCKIVEMSTSKTGKHGHAKVHLVGIDIFNGKKYEDICPSTHNMDVPHVKREDYQLTDISDDGYLTLMADNGDLREDLKIPDGDLGTQLRSDFDSGKELLCTVLKSCGEECVIAVKANTALDK.

Lys-52 carries the post-translational modification Hypusine.

This sequence belongs to the eIF-5A family. In terms of processing, lys-52 undergoes hypusination, a unique post-translational modification that consists in the addition of a butylamino group from spermidine to lysine side chain, leading to the formation of the unusual amino acid hypusine. eIF-5As are the only known proteins to undergo this modification, which is essential for their function.

The protein resides in the cytoplasm. Its function is as follows. Translation factor that promotes translation elongation and termination, particularly upon ribosome stalling at specific amino acid sequence contexts. Binds between the exit (E) and peptidyl (P) site of the ribosome and promotes rescue of stalled ribosome: specifically required for efficient translation of polyproline-containing peptides as well as other motifs that stall the ribosome. Acts as a ribosome quality control (RQC) cofactor by joining the RQC complex to facilitate peptidyl transfer during CAT tailing step. This is Eukaryotic translation initiation factor 5A (eIF-5A) from Spodoptera exigua (Beet armyworm).